The sequence spans 318 residues: Ubiquitin-conjugating enzyme E2 J1 (318 aa).

Topologically, residues 1–282 (METRYNLKSP…QGQPPRAHHT (282 aa)) are cytoplasmic. Residues 10-168 (PAVKRLMKEA…VLLPLKSGSG (159 aa)) enclose the UBC core domain. The active-site Glycyl thioester intermediate is the Cys91. Ser184 carries the post-translational modification Phosphoserine. The span at 215–233 (PTTFQGATASTSYGAQNPS) shows a compositional bias: polar residues. Residues 215–283 (PTTFQGATAS…GQPPRAHHTE (69 aa)) form a disordered region. Positions 249 to 269 (SMSPRQRRAQQQSQRRPSTSP) are enriched in low complexity. Ser266 and Ser268 each carry phosphoserine. Residues 283–303 (EHGGSAMLIIILTLALAALIF) traverse the membrane as a helical; Anchor for type IV membrane protein segment. Residues 304–318 (RRIYLANEYIFDFEL) are Lumenal-facing.

The protein belongs to the ubiquitin-conjugating enzyme family. In terms of assembly, component of the HRD1 complex, which comprises at least SYNV1/HRD1, DERL1/2, FAM8A1, HERPUD1/HERP, OS9, SEL1L and UBE2J1. Interacts with E3 ligase RNF26. Interacts with E3 ligase RNF133. In terms of processing, phosphorylated at Ser-184 in a cytosolic stress-dependent manner by MAP kinase p38 MAPKAPK2. Phosphorylated UBE2J1 is rapidly ubiquitinated and subsequently degraded by the proteasome.

The protein localises to the endoplasmic reticulum membrane. It catalyses the reaction S-ubiquitinyl-[E1 ubiquitin-activating enzyme]-L-cysteine + [E2 ubiquitin-conjugating enzyme]-L-cysteine = [E1 ubiquitin-activating enzyme]-L-cysteine + S-ubiquitinyl-[E2 ubiquitin-conjugating enzyme]-L-cysteine.. It functions in the pathway protein modification; protein ubiquitination. Catalyzes the covalent attachment of ubiquitin to other proteins. Functions in the selective degradation of misfolded membrane proteins from the endoplasmic reticulum (ERAD) and is essential for cells to recover from ER stress. Plays a role in MAPKAPK2-dependent translational control of TNF-alpha synthesis. Also acts as a platform for perinuclear positioning of the endosomal system by mediating ubiquitination of SQSTM1 through interaction with the E3 ubiquitin-protein ligase RNF26. Plays a role in male fecundity through the interaction with the E3 ubiquitin-protein ligase RNF133. This is Ubiquitin-conjugating enzyme E2 J1 (Ube2j1) from Mus musculus (Mouse).